A 102-amino-acid chain; its full sequence is WFSFIREAYQGAEDMWRAYSDMKEANWRDSDKYFHARGNYDAAKRGPGGVWAAEVISDAREGIQSLMGRGHEDSMADQEANRWGRSGNDPNHYRPAGLPDKY.

A disordered region spans residues 68 to 102; it reads GRGHEDSMADQEANRWGRSGNDPNHYRPAGLPDKY. Residues 69 to 82 show a composition bias toward basic and acidic residues; that stretch reads RGHEDSMADQEANR.

It belongs to the SAA family. In terms of tissue distribution, expressed by the liver; secreted in plasma.

The protein resides in the secreted. Its function is as follows. Major acute phase reactant. Apolipoprotein of the HDL complex. This Mesocricetus auratus (Golden hamster) protein is Serum amyloid A-5 protein.